The following is a 134-amino-acid chain: Ribonuclease P protein component (134 aa).

It belongs to the RnpA family. As to quaternary structure, consists of a catalytic RNA component (M1 or rnpB) and a protein subunit.

It carries out the reaction Endonucleolytic cleavage of RNA, removing 5'-extranucleotides from tRNA precursor.. Its function is as follows. RNaseP catalyzes the removal of the 5'-leader sequence from pre-tRNA to produce the mature 5'-terminus. It can also cleave other RNA substrates such as 4.5S RNA. The protein component plays an auxiliary but essential role in vivo by binding to the 5'-leader sequence and broadening the substrate specificity of the ribozyme. The sequence is that of Ribonuclease P protein component from Ectopseudomonas mendocina (strain ymp) (Pseudomonas mendocina).